Consider the following 490-residue polypeptide: Trigger factor (490 aa).

The region spanning 162–243 (GDFVSIDLSA…VGSIKERELP (82 aa)) is the PPIase FKBP-type domain. The disordered stretch occupies residues 433–490 (VDAVLGPRRGGADEAGAEAEAAEEKPAKAKKSADSEKTDKSEKAEKKSKKKSKDDDAE). Basic and acidic residues predominate over residues 454-477 (AEEKPAKAKKSADSEKTDKSEKAE).

It belongs to the FKBP-type PPIase family. Tig subfamily.

Its subcellular location is the cytoplasm. It carries out the reaction [protein]-peptidylproline (omega=180) = [protein]-peptidylproline (omega=0). Functionally, involved in protein export. Acts as a chaperone by maintaining the newly synthesized protein in an open conformation. Functions as a peptidyl-prolyl cis-trans isomerase. This chain is Trigger factor, found in Mycobacteroides abscessus (strain ATCC 19977 / DSM 44196 / CCUG 20993 / CIP 104536 / JCM 13569 / NCTC 13031 / TMC 1543 / L948) (Mycobacterium abscessus).